A 118-amino-acid polypeptide reads, in one-letter code: Large ribosomal subunit protein bL20 (118 aa).

Belongs to the bacterial ribosomal protein bL20 family.

Binds directly to 23S ribosomal RNA and is necessary for the in vitro assembly process of the 50S ribosomal subunit. It is not involved in the protein synthesizing functions of that subunit. This chain is Large ribosomal subunit protein bL20, found in Campylobacter concisus (strain 13826).